Consider the following 260-residue polypeptide: Snake venom serine protease homolog 2A (260 aa).

Positions 1-18 (MVLIRVLANLLILQLSYA) are cleaved as a signal peptide. A propeptide spanning residues 19-24 (QKSSEL) is cleaved from the precursor. Residues 25–251 (IIGGDECNIN…HLDWIKSIIA (227 aa)) enclose the Peptidase S1 domain. 6 cysteine pairs are disulfide-bonded: Cys-31–Cys-165, Cys-52–Cys-68, Cys-100–Cys-258, Cys-144–Cys-212, Cys-176–Cys-191, and Cys-202–Cys-227. N-linked (GlcNAc...) asparagine glycans are attached at residues Asn-83, Asn-123, and Asn-124.

It belongs to the peptidase S1 family. Snake venom subfamily. Expressed by the venom gland.

It localises to the secreted. In terms of biological role, snake venom serine protease homolog that may act in the hemostasis system of the prey. The sequence is that of Snake venom serine protease homolog 2A (TLG2A) from Craspedocephalus gramineus (Bamboo pit viper).